Consider the following 266-residue polypeptide: Apolipoprotein A-I (266 aa).

The signal sequence occupies residues Met1–Ala18. Tandem repeats lie at residues Leu67 to Gly88 and Pro89 to Asn110. A 10 X approximate tandem repeats region spans residues Leu67–Gln266. A Methionine sulfoxide modification is found at Met109. The 3; half-length repeat unit spans residues Lys111–Gln121. Repeat copies occupy residues Pro122 to Ala143, Pro144 to Ser165, Pro166 to Ala187, Pro188 to Gly209, and Ala210 to Lys231. The stretch at Pro232–Leu242 is one 9; half-length repeat. Copy 10 of the repeat occupies Pro243–Gln266.

It belongs to the apolipoprotein A1/A4/E family. Homodimer. Interacts with APOA1BP and CLU. Component of a sperm activating protein complex (SPAP), consisting of APOA1, an immunoglobulin heavy chain, an immunoglobulin light chain and albumin. Interacts with NDRG1. Interacts with SCGB3A2. Interacts with NAXE and YJEFN3. Post-translationally, glycosylated. In terms of processing, palmitoylated. Phosphorylation sites are present in the extracellular medium.

Its subcellular location is the secreted. Participates in the reverse transport of cholesterol from tissues to the liver for excretion by promoting cholesterol efflux from tissues and by acting as a cofactor for the lecithin cholesterol acyltransferase (LCAT). As part of the SPAP complex, activates spermatozoa motility. This chain is Apolipoprotein A-I (APOA1), found in Odobenus rosmarus divergens (Pacific walrus).